A 1225-amino-acid chain; its full sequence is uncharacterized protein (1225 aa).

Positions Met-1–Ala-27 are cleaved as a signal peptide. Cys-28 carries N-palmitoyl cysteine lipidation. Cys-28 is lipidated: S-diacylglycerol cysteine. Residues Gln-995–Ser-1014 are disordered.

Belongs to the MG307/MG309/MG338 family.

It localises to the cell membrane. This is an uncharacterized protein from Mycoplasma genitalium (strain ATCC 33530 / DSM 19775 / NCTC 10195 / G37) (Mycoplasmoides genitalium).